The following is a 302-amino-acid chain: Protoheme IX farnesyltransferase (302 aa).

Helical transmembrane passes span 28 to 48, 50 to 70, 93 to 115, 119 to 138, 147 to 167, 172 to 192, 219 to 239, 242 to 262, and 271 to 291; these read LALLMLTMYGAYFAGGGSLDP, MLALLTIMGFTSIGGVTAFNM, LNPYEALAGSLALVIAGVLSAAA, YVALTVIAGLYFDIIAYTQL, IIFGSIAGSMPALGGWAAAAG, GGVLMALIVFLWQPMHVWFLG, LIAVSLAGLIAVAWAFALYYG, FLTAVITTVLAALAISRIGGF, and ALKLFKFASPIIAVVFIILPL.

This sequence belongs to the UbiA prenyltransferase family. Protoheme IX farnesyltransferase subfamily.

The protein resides in the cell membrane. The catalysed reaction is heme b + (2E,6E)-farnesyl diphosphate + H2O = Fe(II)-heme o + diphosphate. The protein operates within porphyrin-containing compound metabolism; heme O biosynthesis; heme O from protoheme: step 1/1. Converts heme B (protoheme IX) to heme O by substitution of the vinyl group on carbon 2 of heme B porphyrin ring with a hydroxyethyl farnesyl side group. The chain is Protoheme IX farnesyltransferase from Aeropyrum pernix (strain ATCC 700893 / DSM 11879 / JCM 9820 / NBRC 100138 / K1).